The following is a 524-amino-acid chain: Xanthotoxin 5-hydroxylase CYP82C4 (524 aa).

Residues 1-21 (MDTSLFSLFVPILVFVFIALF) form a helical membrane-spanning segment. Cys463 is a heme binding site.

This sequence belongs to the cytochrome P450 family. Heme serves as cofactor. In terms of tissue distribution, expressed in both primary and lateral roots under iron-deficient conditions, except in apical root zones, and mostly in the root epidermal layer.

The protein resides in the membrane. It catalyses the reaction fraxetin + reduced [NADPH--hemoprotein reductase] + O2 = sideretin (reduced form) + oxidized [NADPH--hemoprotein reductase] + H2O + H(+). The catalysed reaction is xanthotoxin + reduced [NADPH--hemoprotein reductase] + O2 = 5-hydroxyxanthotoxin + oxidized [NADPH--hemoprotein reductase] + H2O + 2 H(+). The protein operates within phenylpropanoid metabolism. In terms of biological role, can hydroxylate xanthotoxin (8-methoxypsoralen) to form 5-hydroxyxanthotoxin (5-hydroxy-8-methoxypsoralen) in vivo and in vitro. Involved in the early iron deficiency response, possibly through an IDE1-like mediated pathway. Involved in the pathway of sideretin biosynthesis from feruloyl CoA, a redox-active catecholic metabolite exuded by roots in response to iron deficiency in order to facilitate the uptake of iron; this pathway consists in the successive conversion from feruloyl CoA to scopoletin, from scopoletin to fraxetin and from fraxetin to sideretin. Catalyzes the biosynthesis of sideretin via fraxetin hydroxylation. This chain is Xanthotoxin 5-hydroxylase CYP82C4, found in Arabidopsis thaliana (Mouse-ear cress).